A 427-amino-acid polypeptide reads, in one-letter code: Light-independent protochlorophyllide reductase subunit N (427 aa).

Cys32, Cys57, and Cys118 together coordinate [4Fe-4S] cluster.

The protein belongs to the BchN/ChlN family. In terms of assembly, protochlorophyllide reductase is composed of three subunits; BchL, BchN and BchB. Forms a heterotetramer of two BchB and two BchN subunits. It depends on [4Fe-4S] cluster as a cofactor.

It catalyses the reaction chlorophyllide a + oxidized 2[4Fe-4S]-[ferredoxin] + 2 ADP + 2 phosphate = protochlorophyllide a + reduced 2[4Fe-4S]-[ferredoxin] + 2 ATP + 2 H2O. The protein operates within porphyrin-containing compound metabolism; bacteriochlorophyll biosynthesis (light-independent). Its function is as follows. Component of the dark-operative protochlorophyllide reductase (DPOR) that uses Mg-ATP and reduced ferredoxin to reduce ring D of protochlorophyllide (Pchlide) to form chlorophyllide a (Chlide). This reaction is light-independent. The NB-protein (BchN-BchB) is the catalytic component of the complex. The polypeptide is Light-independent protochlorophyllide reductase subunit N (Rubrivivax gelatinosus (strain NBRC 100245 / IL144)).